Consider the following 1419-residue polypeptide: MIQQFTLLFLYLSFATAKAITGIFNSIDSLTWSNAGNYAFKGPGYPTWNAVLGWSLDGTSANPGDTFILNMPCVFKFTASQKSVDLTADGVKYATCQFYSGEEFTTFSSLKCTVNNNLRSSIKALGTVTLPIAFNVGGTGSSVDLEDSKCFTAGTNTVTFNDGSKKLSIAVNFEKSTVDQSGYLTTSRFMPSLNKIATLYVAPQCENGYTSGTMGFSTSYGDVAIDCSNVHIGISKGVNDWNHPVTSESFSYTKSCSSFGISITYQNVPAGYRPFIDAYISPSDNNQYQLSYKNDYTCVDDYWQHAPFTLKWTGYKNSDAGSNGIVIVATTRTVTDSTTAVTTLPFNPSVDKTKTIEILQPIPTTTITTSYVGVTTSYSTKTAPIGETATVIVDVPYHTTTTVTSEWTGTITTTTTRTNPTDSIDTVVVQVPSPNPTTTTTQFWSESFTSTTTITNSLKGTDSVIVREPHNPTVTTTEFWSESFATTETITSKPEGTDSVIVREPHNPTVTTTEFWSESYATTETITNGPEGTDSVIVREPHNPTVTTTKFWSESYATTETITNKPEGTDSVIVKEPYNPTVTTTEFWSESYATTETITNGPEGTDSVIVREPHNPTVTTTEFWSESYATTETITTGPLGTDSIVIHDPLEESSSTTAIESSDSNISSSAQESSSSVEQSSSIVGLSSSSDIPLSSDMPSSSSTGLTSSESSTVSSYDSDSSSSIESSTLSSSDRCSSSISDTTSFWDSSSSDLESTSITWSSSIDAQSSHLVQSVSNSISTSQELSSSSSEESSTFATDALVSSDASSILSSDTSSYYPSSTISSSDDFPHTIAGESDSLSISFITSTVEISSDSVSLTSDPASSFDSSSSLNSDSSSSPSSDQSDILTSSSFSTLVVPSFSLSSSSSLSLTYPHYVNSTTYHASESESSSVASPSMASESANDDTYTLSESTDTTSSIGTDSSTVTFCRRDNGDGCIVTGMPSSSIDSEQTSDVTTTSSFVASSTPTSAEQSITDNPNIDSSQTSASSSTKSSVSVSDTVVNSILLSETSTLSSDDSTSSDTSISSTTNSDTGNINAGSSHTSTASIKESSIQKTGVTLSSSYLSTKLSSTSDITIELITTELITTELTTIEDNEPNTFTSTPSSHSEIFSSDNSVLSKQVDRESTIKTSPTTDVTTVSSLSVHSTEASTATLGENSFSNVASTPSNIATSLRSTSSSSNHATESSGTVKSEASAEAIPSPPTSTDNRLSYSTEEAKGITYANSGSTNNLITESQVAAPTDSTSVLIENPVVTSTFDDNSSAAVDQPSKTKSIEESIMNPDSTNETNNGFIATLSQAQVPSSSIHSELISTTTAKTTDASMNGDSAASNSQPTTLIQQVATSSYNQPLITTYAGSSSATKHPSWLLKFISVALFFFL.

A signal peptide spans 1 to 17 (MIQQFTLLFLYLSFATA). Disulfide bonds link Cys73/Cys150, Cys96/Cys112, Cys205/Cys298, and Cys227/Cys256. 8 ALS repeats span residues 365–396 (TTITTSYVGVTTSYSTKTAPIGETATVIVDVP), 401–432 (TTVTSEWTGTITTTTTRTNPTDSIDTVVVQVP), 438–469 (TTTTQFWSESFTSTTTITNSLKGTDSVIVREP), 474–505 (VTTTEFWSESFATTETITSKPEGTDSVIVREP), 510–541 (VTTTEFWSESYATTETITNGPEGTDSVIVREP), 546–577 (VTTTKFWSESYATTETITNKPEGTDSVIVKEP), 582–613 (VTTTEFWSESYATTETITNGPEGTDSVIVREP), and 618–649 (VTTTEFWSESYATTETITTGPLGTDSIVIHDP). 2 disordered regions span residues 652–752 (ESSS…SSSS) and 864–885 (ASSFDSSSSLNSDSSSSPSSDQ). An N-linked (GlcNAc...) asparagine glycan is attached at Asn665. Asn919 carries an N-linked (GlcNAc...) asparagine glycan. Disordered regions lie at residues 926-966 (SESE…DSST), 981-1035 (TGMP…TKSS), 1051-1093 (TSTL…KESS), 1134-1177 (EDNE…TTDV), and 1211-1252 (ATSL…NRLS). Low complexity-rich tracts occupy residues 928–942 (SESSSVASPSMASES), 951–966 (SESTDTTSSIGTDSST), and 993–1011 (TSDVTTTSSFVASSTPTSA). Residues 1012 to 1022 (EQSITDNPNID) are compositionally biased toward polar residues. 2 stretches are compositionally biased toward low complexity: residues 1023–1035 (SSQTSASSSTKSS) and 1051–1078 (TSTLSSDDSTSSDTSISSTTNSDTGNIN). Polar residues-rich tracts occupy residues 1079–1093 (AGSSHTSTASIKESS) and 1138–1160 (PNTFTSTPSSHSEIFSSDNSVLS). Positions 1212–1230 (TSLRSTSSSSNHATESSGT) are enriched in low complexity. N-linked (GlcNAc...) asparagine glycosylation is found at Asn1301 and Asn1326. A lipid anchor (GPI-anchor amidated serine) is attached at Ser1398. A propeptide spans 1399 to 1419 (SATKHPSWLLKFISVALFFFL) (removed in mature form).

The protein belongs to the ALS family. In terms of assembly, forms homodimers through the tandem repeats. Aggregates in amyloid-like structures, with self-propagating secondary-structure changes, amyloid-characteristic dye binding, and induced birefringence. Post-translationally, N-glycosylated and O-glycosylated. The GPI-anchor is attached to the protein in the endoplasmic reticulum and serves to target the protein to the cell surface. There, the glucosamine-inositol phospholipid moiety is cleaved off and the GPI-modified mannoprotein is covalently attached via its lipidless GPI glycan remnant to the 1,6-beta-glucan of the outer cell wall layer.

The protein resides in the cell membrane. Its subcellular location is the secreted. It is found in the cell wall. Its function is as follows. Cell surface adhesion protein which mediates both yeast-to-host tissue adherence and yeast aggregation. Plays an important role in the pathogenesis of C.albicans infections. Forms amyloid structures, essential for cell-cell association and cell-substrate adhesion to polystyrene. The chain is Agglutinin-like protein 5 (ALS5) from Candida albicans (Yeast).